Consider the following 115-residue polypeptide: Large ribosomal subunit protein bL20 (115 aa).

Belongs to the bacterial ribosomal protein bL20 family.

Functionally, binds directly to 23S ribosomal RNA and is necessary for the in vitro assembly process of the 50S ribosomal subunit. It is not involved in the protein synthesizing functions of that subunit. This Malacoplasma penetrans (strain HF-2) (Mycoplasma penetrans) protein is Large ribosomal subunit protein bL20.